The sequence spans 643 residues: MPIITLPDGSQRQFDNPVSVMEVAQSIGAGLAKATIAGRVNGERRDACDIISEDSSLEIITAKDEDGLEIIRHSCAHLLGHAIKQLFPDVKMAIGPTIDNGFYYDVDLDRSLTQEDLDAIEKRMLELAKTNYDVVKKRVSWQEARDTFEKRGEPYKMAILDENIERTATPALYHHEEYIDMCRGPHVPNMRFCHHFKLQKVAGAYWRGDSKNKMLQRIYGTAWADKKQLAEYLTRLEEAAKRDHRRIGKALDLYHMQEEAPGLVFWHNDGWTIFRELETFVRTKLKEYDYQEVKGPFMMDRVLWERTGHWQNYADLMFTTQSENREYAIKPMNCPGHVQIFNQGLKSYRDLPIRMAEFGSCHRNEPSGSLHGLMRVRGFTQDDAHIFCTEDQIESEVTSCIRMVYDIYSTFGFSNIQVKLSTRPENRIGDDAMWDRAEDGLAKALTANGLSYEIQEGEGAFYGPKIEFALRDCLDREWQCGTIQLDFALPGRLDASYVAEDNGRRTPVMIHRAILGSIERFIGIITEEYAGFFPTWLAPTQAVVMNITDSQADYVQKVTKALSDAGIRAKSDLRNEKVGFKVREHTLRRVPYMLVCGDKEIEAGKVSVRTRKGADLGTFTIDEFVEILKNQVKARGLKLLGEE.

In terms of domain architecture, TGS spans 1 to 61 (MPIITLPDGS…SEDSSLEIIT (61 aa)). Residues 243-534 (DHRRIGKALD…ITEEYAGFFP (292 aa)) are catalytic. Residues Cys334, His385, and His511 each contribute to the Zn(2+) site.

The protein belongs to the class-II aminoacyl-tRNA synthetase family. Homodimer. It depends on Zn(2+) as a cofactor.

Its subcellular location is the cytoplasm. It carries out the reaction tRNA(Thr) + L-threonine + ATP = L-threonyl-tRNA(Thr) + AMP + diphosphate + H(+). Functionally, catalyzes the attachment of threonine to tRNA(Thr) in a two-step reaction: L-threonine is first activated by ATP to form Thr-AMP and then transferred to the acceptor end of tRNA(Thr). Also edits incorrectly charged L-seryl-tRNA(Thr). In Actinobacillus pleuropneumoniae serotype 7 (strain AP76), this protein is Threonine--tRNA ligase.